We begin with the raw amino-acid sequence, 726 residues long: Catalase-peroxidase (726 aa).

A disordered region spans residues 1-33; sequence MSTSDDIHNTTATGKCPFHQGGHDQSAGAGTTT. Positions 105 to 226 form a cross-link, tryptophyl-tyrosyl-methioninium (Trp-Tyr) (with M-252); it reads WHGAGTYRSI…LGATEMGLIY (122 aa). His-106 functions as the Proton acceptor in the catalytic mechanism. A cross-link (tryptophyl-tyrosyl-methioninium (Tyr-Met) (with W-105)) is located at residues 226 to 252; sequence YVNPEGPDHSGEPLSAAAAIRATFGNM. Heme b is bound at residue His-267.

Belongs to the peroxidase family. Peroxidase/catalase subfamily. Homodimer or homotetramer. Heme b serves as cofactor. In terms of processing, formation of the three residue Trp-Tyr-Met cross-link is important for the catalase, but not the peroxidase activity of the enzyme.

The catalysed reaction is H2O2 + AH2 = A + 2 H2O. It catalyses the reaction 2 H2O2 = O2 + 2 H2O. Its function is as follows. Bifunctional enzyme with both catalase and broad-spectrum peroxidase activity. The polypeptide is Catalase-peroxidase (Shigella sonnei (strain Ss046)).